Reading from the N-terminus, the 82-residue chain is Small ribosomal subunit protein bS18 (82 aa).

Residues 1–10 show a composition bias toward polar residues; the sequence is MTDTNQNSSR. Residues 1–21 form a disordered region; it reads MTDTNQNSSRRPFHRRRKTCP.

This sequence belongs to the bacterial ribosomal protein bS18 family. As to quaternary structure, part of the 30S ribosomal subunit. Forms a tight heterodimer with protein bS6.

Binds as a heterodimer with protein bS6 to the central domain of the 16S rRNA, where it helps stabilize the platform of the 30S subunit. In Bartonella tribocorum (strain CIP 105476 / IBS 506), this protein is Small ribosomal subunit protein bS18.